The primary structure comprises 271 residues: 5'-AMP-activated protein kinase subunit beta-2 (271 aa).

Residues 1–46 (MGNTTSERVSGERHGAKAARAEGGGHGPGKEHKIMVGSTDDPSVFS) are disordered. A Phosphoserine; by ULK1 modification is found at serine 38. Threonine 39 bears the Phosphothreonine; by ULK1 mark. At serine 68 the chain carries Phosphoserine; by ULK1. Phosphoserine is present on residues serine 94 and serine 107. Threonine 147 bears the Phosphothreonine mark. A phosphoserine mark is found at serine 157, serine 169, serine 173, and serine 183.

The protein belongs to the 5'-AMP-activated protein kinase beta subunit family. In terms of assembly, AMPK is a heterotrimer of an alpha catalytic subunit (PRKAA1 or PRKAA2), a beta (PRKAB1 or PRKAB2) and a gamma non-catalytic subunits (PRKAG1, PRKAG2 or PRKAG3). In terms of processing, phosphorylated when associated with the catalytic subunit (PRKAA1 or PRKAA2). Phosphorylated by ULK1 and ULK2; leading to negatively regulate AMPK activity and suggesting the existence of a regulatory feedback loop between ULK1, ULK2 and AMPK.

Non-catalytic subunit of AMP-activated protein kinase (AMPK), an energy sensor protein kinase that plays a key role in regulating cellular energy metabolism. In response to reduction of intracellular ATP levels, AMPK activates energy-producing pathways and inhibits energy-consuming processes: inhibits protein, carbohydrate and lipid biosynthesis, as well as cell growth and proliferation. AMPK acts via direct phosphorylation of metabolic enzymes, and by longer-term effects via phosphorylation of transcription regulators. Also acts as a regulator of cellular polarity by remodeling the actin cytoskeleton; probably by indirectly activating myosin. Beta non-catalytic subunit acts as a scaffold on which the AMPK complex assembles, via its C-terminus that bridges alpha (PRKAA1 or PRKAA2) and gamma subunits (PRKAG1, PRKAG2 or PRKAG3). This chain is 5'-AMP-activated protein kinase subunit beta-2 (Prkab2), found in Mus musculus (Mouse).